A 216-amino-acid chain; its full sequence is 3-isopropylmalate dehydratase small subunit (216 aa).

The protein belongs to the LeuD family. LeuD type 1 subfamily. As to quaternary structure, heterodimer of LeuC and LeuD.

It catalyses the reaction (2R,3S)-3-isopropylmalate = (2S)-2-isopropylmalate. Its pathway is amino-acid biosynthesis; L-leucine biosynthesis; L-leucine from 3-methyl-2-oxobutanoate: step 2/4. Its function is as follows. Catalyzes the isomerization between 2-isopropylmalate and 3-isopropylmalate, via the formation of 2-isopropylmaleate. The sequence is that of 3-isopropylmalate dehydratase small subunit from Polaromonas sp. (strain JS666 / ATCC BAA-500).